We begin with the raw amino-acid sequence, 145 residues long: uncharacterized protein (145 aa).

This sequence belongs to the methyltransferase superfamily.

In terms of biological role, probable methyltransferase. This is an uncharacterized protein from Schizosaccharomyces pombe (strain 972 / ATCC 24843) (Fission yeast).